A 104-amino-acid chain; its full sequence is MNLLKKTYVLKLYVAGNTPNSVRALKTLKNILETDFKGVYALKVIDVLQNPQLAEEDKILATPTLSKVLPPPVRKIIGDLSDREKVLIGLDLLYEEFLEREEEL.

The protein belongs to the KaiB family. In terms of assembly, the KaiABC complex composition changes during the circadian cycle to control KaiC phosphorylation. Complexes KaiC(6), KaiA(2-4):KaiC(6), KaiB(6):KaiC(6) and KaiC(6):KaiB(6):KaiA(12) are among the most important forms, many form cooperatively. Undergoes a major conformational rearrangment; in the free state forms homotetramers as a dimer of dimers. When bound to the CI domain of KaiC switches to a monomeric thioredoxin-fold (KaiB(fs)). KaiB(fs) binds CikA, leading it to dephosphorylate phospho-RpaA.

Its function is as follows. Key component of the KaiABC oscillator complex, which constitutes the main circadian regulator in cyanobacteria. Complex composition changes during the circadian cycle to control KaiC phosphorylation. KaiA stimulates KaiC autophosphorylation, while KaiB sequesters KaiA, leading to KaiC autodephosphorylation. Phospho-Ser-431 KaiC accumulation triggers binding of KaiB to form the KaiB(6):KaiC(6) complex, leading to changes in output regulators CikA and SasA. KaiB switches to a thioredoxin-like fold (KaiB(fs)) when bound to KaiC. KaiB(6):KaiC(6) formation exposes a site for KaiA binding that sequesters KaiA from KaiC, making the KaiC(6):KaiB(6):KaiA(12) complex that results in KaiC autodephosphorylation. A metamorphic protein which reversibly switches between an inactive tetrameric fold and a rare, thioredoxin-like monomeric fold (KaiB(fs)). KaiB(fs) binds phospho-KaiC, KaiA and CikA. KaiA and CikA compete for binding to KaiB(fs), and KaiB(fs) and SasA compete for binding to KaiC, thus the clock oscillator and output signal pathway are tightly coupled. This is Circadian clock oscillator protein KaiB from Picosynechococcus sp. (strain ATCC 27264 / PCC 7002 / PR-6) (Agmenellum quadruplicatum).